A 297-amino-acid polypeptide reads, in one-letter code: N-acetylmuramic acid 6-phosphate etherase (297 aa).

The 164-residue stretch at 55-218 folds into the SIS domain; the sequence is ATDALKSGGR…STGAMVKFGK (164 aa). Catalysis depends on E83, which acts as the Proton donor. The active site involves E114.

This sequence belongs to the GCKR-like family. MurNAc-6-P etherase subfamily. In terms of assembly, homodimer.

It catalyses the reaction N-acetyl-D-muramate 6-phosphate + H2O = N-acetyl-D-glucosamine 6-phosphate + (R)-lactate. It functions in the pathway amino-sugar metabolism; 1,6-anhydro-N-acetylmuramate degradation. It participates in amino-sugar metabolism; N-acetylmuramate degradation. The protein operates within cell wall biogenesis; peptidoglycan recycling. Functionally, specifically catalyzes the cleavage of the D-lactyl ether substituent of MurNAc 6-phosphate, producing GlcNAc 6-phosphate and D-lactate. Together with AnmK, is also required for the utilization of anhydro-N-acetylmuramic acid (anhMurNAc) either imported from the medium or derived from its own cell wall murein, and thus plays a role in cell wall recycling. This is N-acetylmuramic acid 6-phosphate etherase from Enterobacter sp. (strain 638).